A 159-amino-acid chain; its full sequence is Growth arrest and DNA damage-inducible protein GADD45 gamma (159 aa).

The tract at residues 43 to 86 (VYESAKVLNVDPDNVTFCVLAADEEDEGDIALQIHFTLIQAFCC) is homodimerization.

It belongs to the GADD45 family. In terms of assembly, undergoes concentration-dependent homodimerization, which is required for growth inhibititory activity and enhances interaction with PCNA. Interacts with GADD45GIP1. Interacts with PCNA.

Functionally, involved in the regulation of growth and apoptosis. Mediates activation of stress-responsive MTK1/MEKK4 MAPKKK. The polypeptide is Growth arrest and DNA damage-inducible protein GADD45 gamma (GADD45G) (Bos taurus (Bovine)).